A 176-amino-acid chain; its full sequence is Probable inosine/xanthosine triphosphatase (176 aa).

Aspartate 36 contributes to the Mg(2+) binding site.

The protein belongs to the YjjX NTPase family. Homodimer. It depends on Mg(2+) as a cofactor. The cofactor is Mn(2+).

It catalyses the reaction XTP + H2O = XDP + phosphate + H(+). The enzyme catalyses ITP + H2O = IDP + phosphate + H(+). In terms of biological role, phosphatase that hydrolyzes non-canonical purine nucleotides such as XTP and ITP to their respective diphosphate derivatives. Probably excludes non-canonical purines from DNA/RNA precursor pool, thus preventing their incorporation into DNA/RNA and avoiding chromosomal lesions. The sequence is that of Probable inosine/xanthosine triphosphatase from Saccharolobus solfataricus (strain ATCC 35092 / DSM 1617 / JCM 11322 / P2) (Sulfolobus solfataricus).